Consider the following 131-residue polypeptide: Small ribosomal subunit protein bS6 (131 aa).

The disordered stretch occupies residues 96-131; the sequence is VTAPSPMMKEEKSKSLLAKDEAAAPAPAPATEQATA. A compositionally biased stretch (basic and acidic residues) spans 103 to 117; the sequence is MKEEKSKSLLAKDEA. The segment covering 118 to 131 has biased composition (low complexity); the sequence is AAPAPAPATEQATA.

The protein belongs to the bacterial ribosomal protein bS6 family.

Its function is as follows. Binds together with bS18 to 16S ribosomal RNA. This is Small ribosomal subunit protein bS6 from Methylobacillus flagellatus (strain ATCC 51484 / DSM 6875 / VKM B-1610 / KT).